A 546-amino-acid chain; its full sequence is Thermolysin (546 aa).

The signal sequence occupies residues 1 to 25 (MNKRAMLGAIGLAFGLMAWPFGASA). The propeptide at 26–228 (KEKSMVWNEQ…EAKPGGGQPV (203 aa)) is activation peptide. Ca(2+) contacts are provided by Asp-287, Asp-289, Gln-291, and Asp-368. His-372 serves as a coordination point for Zn(2+). Residue Glu-373 is part of the active site. Positions 376 and 396 each coordinate Zn(2+). Ca(2+)-binding residues include Glu-407, Asn-413, Asp-415, Glu-417, Glu-420, Tyr-423, Thr-424, Ile-427, and Asp-430. His-461 (proton donor) is an active-site residue.

This sequence belongs to the peptidase M4 family. Requires Ca(2+) as cofactor. Zn(2+) is required as a cofactor.

It localises to the secreted. It catalyses the reaction Preferential cleavage: Xaa-|-Leu &gt; Xaa-|-Phe.. Its function is as follows. Extracellular zinc metalloprotease. This chain is Thermolysin, found in Alicyclobacillus acidocaldarius subsp. acidocaldarius (Bacillus acidocaldarius).